The primary structure comprises 380 residues: Protein-tyrosine sulfotransferase A (380 aa).

Topologically, residues 1 to 6 (MRKNRE) are cytoplasmic. The chain crosses the membrane as a helical; Signal-anchor for type II membrane protein span at residues 7 to 27 (LLLVLFLVVFILFYFITARTA). Residues 28–380 (DDPYYSNHRE…PIVDNEVSKL (353 aa)) lie on the Lumenal side of the membrane. N-linked (GlcNAc...) asparagine glycosylation is present at asparagine 66. 79–83 (RSGTT) contacts 3'-phosphoadenylyl sulfate. A disulfide bridge connects residues cysteine 97 and cysteine 157. The active-site Proton donor/acceptor is the glutamate 100. The interaction with peptide substrate stretch occupies residues 102–106 (RVIPR). Residues arginine 184, serine 192, and arginine 196 each coordinate 3'-phosphoadenylyl sulfate. Cysteine 226 and cysteine 234 are joined by a disulfide. 3'-phosphoadenylyl sulfate is bound by residues tyrosine 239, 284–293 (SSDQVVKPVN), and lysine 299.

The protein belongs to the protein sulfotransferase family.

It is found in the golgi apparatus membrane. The enzyme catalyses L-tyrosyl-[protein] + 3'-phosphoadenylyl sulfate = O-sulfo-L-tyrosine-[protein] + adenosine 3',5'-bisphosphate + H(+). Its function is as follows. Catalyzes the O-sulfation of tyrosine residues within acidic motifs of polypeptides, using 3'-phosphoadenylyl sulfate (PAPS) as cosubstrate. This is Protein-tyrosine sulfotransferase A (tpst-1) from Caenorhabditis elegans.